A 574-amino-acid chain; its full sequence is MPRGLELLIAQTILQGFDAQYGRFLEVTSGAQQRFEQADWHAVQQAMKNRIHLYDHHVGLVVEQLRCITNGQSTDAAFLLRVKEHYTRLLPDYPRFEIAESFFNSVYCRLFDHRSLTPERLFIFSSQPERRFRTIPRPLAKDFHPDHGWESLLMRVISDLPLRLRWQNKSRDIHYIVRHLTETLGTDNLAESHLQVANELFYRNKAAWLVGKLITPSGTLPFLLPIHQTDDGELFIDTCLTTTAEASIVFGFARSYFMVYAPLPAALVEWLREILPGKTTAELYMAIGCQKHAKTESYREYLVYLQGCNEQFIEAPGIRGMVMLVFTLPGFDRVFKVIKDRFAPQKEMSAAHVRACYQLVKEHDRVGRMADTQEFENFVLEKRHISPALMELLLQEAAEKITDLGEQIVIRHLYIERRMVPLNIWLEQVEGQQLRDAIEEYGNAIRQLAAANIFPGDMLFKNFGVTRHGRVVFYDYDEICYMTEVNFRDIPLPRYPEDELASEPWYSVSPGDVFPEEFRHWLCADPRIGPLFEEMHADLFRADYWRALQNRIREGHVEDVYAYRRRQRFSVRFV.

Residues 315-321 (APGIRGM) and Lys-336 each bind ATP. Residue Asp-371 is part of the active site.

This sequence belongs to the AceK family.

It is found in the cytoplasm. It carries out the reaction L-seryl-[isocitrate dehydrogenase] + ATP = O-phospho-L-seryl-[isocitrate dehydrogenase] + ADP + H(+). Its function is as follows. Bifunctional enzyme which can phosphorylate or dephosphorylate isocitrate dehydrogenase (IDH) on a specific serine residue. This is a regulatory mechanism which enables bacteria to bypass the Krebs cycle via the glyoxylate shunt in response to the source of carbon. When bacteria are grown on glucose, IDH is fully active and unphosphorylated, but when grown on acetate or ethanol, the activity of IDH declines drastically concomitant with its phosphorylation. This is Isocitrate dehydrogenase kinase/phosphatase from Escherichia coli O81 (strain ED1a).